Reading from the N-terminus, the 217-residue chain is MRQFIPMRRVLAVATLGALFWAAPASWAAAPPEAASCIACHGAGGMGNPAAGYPRLAGLPEQYLADQLRYFADGARNNAVMSGMAKPLSAAQVTALATYYSKLKPSGKPAPMPTGAAAAEGERLALRGDWEKGIPACIRCHGPGAVGVGENFPALVGQSAAYIEAQIKAWKDGSRSGDPLGLMHTVALRMTDAQTQAVAQWLAAQPLSPTKSASAKH.

The signal sequence occupies residues 1–28 (MRQFIPMRRVLAVATLGALFWAAPASWA). Cytochrome c domains lie at 29–104 (AAPP…SKLK) and 116–206 (AAAA…AAQP). Positions 37, 40, 41, 137, 140, and 141 each coordinate heme c.

Binds 2 heme c groups covalently per subunit.

Functionally, acts as an electron acceptor for the thiosulfate dehydrogenase TsdA. In Thiomonas intermedia (strain K12) (Thiobacillus intermedius), this protein is Thiosulfate dehydrogenase electron acceptor (tsdB).